The chain runs to 147 residues: Spermidine export protein MdtJ (147 aa).

The next 4 membrane-spanning stretches (helical) occupy residues 1 to 21 (MIYW…TLSM), 31 to 51 (TGHI…SLAV), 54 to 74 (VALG…ITIF), and 81 to 101 (ETLS…ILLV). The span at 105–117 (TRKPKQPNRHRGN) shows a compositional bias: basic residues. Residues 105–147 (TRKPKQPNRHRGNRPPSVQGLKTQTTGHHKGVAVESGEHHAAA) are disordered.

Belongs to the drug/metabolite transporter (DMT) superfamily. Small multidrug resistance (SMR) (TC 2.A.7.1) family. MdtJ subfamily. As to quaternary structure, forms a complex with MdtI.

Its subcellular location is the cell inner membrane. Functionally, catalyzes the excretion of spermidine. The protein is Spermidine export protein MdtJ of Yersinia pseudotuberculosis serotype O:3 (strain YPIII).